A 256-amino-acid polypeptide reads, in one-letter code: Acetyl-coenzyme A carboxylase carboxyl transferase subunit alpha (256 aa).

In terms of domain architecture, CoA carboxyltransferase C-terminal spans 1–236 (MTKITRIVRE…KQELLVELEQ (236 aa)).

Belongs to the AccA family. In terms of assembly, acetyl-CoA carboxylase is a heterohexamer composed of biotin carboxyl carrier protein (AccB), biotin carboxylase (AccC) and two subunits each of ACCase subunit alpha (AccA) and ACCase subunit beta (AccD).

It is found in the cytoplasm. The catalysed reaction is N(6)-carboxybiotinyl-L-lysyl-[protein] + acetyl-CoA = N(6)-biotinyl-L-lysyl-[protein] + malonyl-CoA. It participates in lipid metabolism; malonyl-CoA biosynthesis; malonyl-CoA from acetyl-CoA: step 1/1. Functionally, component of the acetyl coenzyme A carboxylase (ACC) complex. First, biotin carboxylase catalyzes the carboxylation of biotin on its carrier protein (BCCP) and then the CO(2) group is transferred by the carboxyltransferase to acetyl-CoA to form malonyl-CoA. The sequence is that of Acetyl-coenzyme A carboxylase carboxyl transferase subunit alpha from Streptococcus gordonii (strain Challis / ATCC 35105 / BCRC 15272 / CH1 / DL1 / V288).